A 114-amino-acid polypeptide reads, in one-letter code: Immunoglobulin kappa variable 6D-21 (114 aa).

The first 19 residues, 1 to 19 (MSPSQLIGFLLLWVPASRG), serve as a signal peptide directing secretion. Positions 20–42 (EIVLTQSPDFQSVTPKEKVTITC) are framework-1. An Ig-like domain is found at 20–114 (EIVLTQSPDF…YYCHQSSSLP (95 aa)). Cys42 and Cys107 are joined by a disulfide. The tract at residues 43–53 (RASQSIGSSLH) is complementarity-determining-1. Residues 54 to 68 (WYQQKPDQSPKLLIK) form a framework-2 region. Positions 69–75 (YASQSIS) are complementarity-determining-2. A framework-3 region spans residues 76–107 (GVPSRFSGSGSGTDFTLTINSLEAEDAAAYYC). A complementarity-determining-3 region spans residues 108–114 (HQSSSLP).

In terms of assembly, immunoglobulins are composed of two identical heavy chains and two identical light chains; disulfide-linked.

It localises to the secreted. The protein resides in the cell membrane. In terms of biological role, v region of the variable domain of immunoglobulin light chains that participates in the antigen recognition. Immunoglobulins, also known as antibodies, are membrane-bound or secreted glycoproteins produced by B lymphocytes. In the recognition phase of humoral immunity, the membrane-bound immunoglobulins serve as receptors which, upon binding of a specific antigen, trigger the clonal expansion and differentiation of B lymphocytes into immunoglobulins-secreting plasma cells. Secreted immunoglobulins mediate the effector phase of humoral immunity, which results in the elimination of bound antigens. The antigen binding site is formed by the variable domain of one heavy chain, together with that of its associated light chain. Thus, each immunoglobulin has two antigen binding sites with remarkable affinity for a particular antigen. The variable domains are assembled by a process called V-(D)-J rearrangement and can then be subjected to somatic hypermutations which, after exposure to antigen and selection, allow affinity maturation for a particular antigen. This Homo sapiens (Human) protein is Immunoglobulin kappa variable 6D-21.